We begin with the raw amino-acid sequence, 377 residues long: Membrane progestin receptor epsilon (377 aa).

Residues 1–40 (MPRRLQPRGAGTKGPPAPAPAASGAARNSHSAASRDPPAS) are disordered. Topologically, residues 1 to 86 (MPRRLQPRGA…VLKPTNETLN (86 aa)) are cytoplasmic. The span at 9-26 (GAGTKGPPAPAPAASGAA) shows a compositional bias: low complexity. Residues 87-107 (FWTHFIPLLLFLSKFCRLFFL) form a helical membrane-spanning segment. At 108–116 (SGGDVPFHH) the chain is on the extracellular side. Residues 117-137 (PWLLPLWCYASGVLLTFAMSC) form a helical membrane-spanning segment. The Cytoplasmic segment spans residues 138-162 (TAHVFSCLSLRLRAAFFYLDYASIS). The helical transmembrane segment at 163–183 (YYGFGSTVAYYYYLLPGLSLL) threads the bilayer. The Extracellular portion of the chain corresponds to 184–205 (DARVMTPYLQQRLGWHVDCTRL). Residues 206-226 (IAAYRALVLPVAFVLAVACTV) form a helical membrane-spanning segment. Topologically, residues 227 to 243 (ACCKSRTDWCTYPFALR) are cytoplasmic. A helical transmembrane segment spans residues 244–264 (TFVFVMPLSMACPIMLESWLF). Topologically, residues 265–301 (DLRGENPTLFVHFYRRYFWLVVAAFFNVSKIPERIQP) are extracellular. A helical transmembrane segment spans residues 302 to 322 (GLFDIIGHSHQLFHIFTFLSI). Residues 323-343 (YDQVYYVEEGLRQFLQAPPAA) are Cytoplasmic-facing. A helical transmembrane segment spans residues 344 to 364 (PTFSGTVGYMLLLVVCLGLVI). Topologically, residues 365-377 (RKFLNSSEFCSKK) are extracellular.

It belongs to the ADIPOR family. As to quaternary structure, homodimer. In terms of tissue distribution, expression levels vary widely in a range of tissues. Expressed in the brain, at high level in the pituitary gland and also in hypothalamus, limbic system, caudate nucleus accumens, pons and olfactory bulb.

The protein localises to the cell membrane. In terms of biological role, plasma membrane progesterone (P4) receptor coupled to G proteins. Seems to act through a G(s) mediated pathway. May be involved in regulating rapid P4 signaling in the nervous system. Also binds dehydroepiandrosterone (DHEA), pregnanolone, pregnenolone and allopregnanolone. This chain is Membrane progestin receptor epsilon, found in Homo sapiens (Human).